The primary structure comprises 1464 residues: DNA-directed RNA polymerase subunit beta' (1464 aa).

Zn(2+)-binding residues include C66, C68, C96, and C99. Residues D491, D493, and D495 each contribute to the Mg(2+) site. The Zn(2+) site is built by C838, C912, C919, and C922. The span at 1143–1200 (NDDDDDDYYDSDYYDYYDYSDDDDDYDDYDDYYYNYDDDENDNDNDYDYDYDYDYDYD) shows a compositional bias: acidic residues. The segment at 1143-1229 (NDDDDDDYYD…YDYDYDSDSD (87 aa)) is disordered. Residues 1204–1219 (HNSYSHNSYSPSSNDN) are compositionally biased toward low complexity. The span at 1220–1229 (YDYDYDSDSD) shows a compositional bias: acidic residues.

This sequence belongs to the RNA polymerase beta' chain family. The RNAP catalytic core consists of 2 alpha, 1 beta, 1 beta' and 1 omega subunit. When a sigma factor is associated with the core the holoenzyme is formed, which can initiate transcription. It depends on Mg(2+) as a cofactor. Zn(2+) serves as cofactor.

The enzyme catalyses RNA(n) + a ribonucleoside 5'-triphosphate = RNA(n+1) + diphosphate. Functionally, DNA-dependent RNA polymerase catalyzes the transcription of DNA into RNA using the four ribonucleoside triphosphates as substrates. The protein is DNA-directed RNA polymerase subunit beta' of Karelsulcia muelleri (strain GWSS) (Sulcia muelleri).